The primary structure comprises 519 residues: uncharacterized protein (519 aa).

The next 14 membrane-spanning stretches (helical) occupy residues 37–57 (ISMS…AQLM), 82–102 (GQLS…ILIA), 114–134 (MFVL…FSYY), 146–166 (ALTG…LGRV), 175–195 (LIFA…SVFS), 209–229 (WTTA…IPHI), 240–260 (FDYL…FSWN), 269–289 (VPYV…FVLV), 309–329 (CVLI…YYLW), 337–357 (FATP…GCAA), 373–393 (IMVV…TAPI), 402–422 (FVSI…ATLM), 434–454 (IAAS…LGIA), and 475–495 (AWYM…LTVF).

This sequence belongs to the major facilitator superfamily.

Its subcellular location is the endoplasmic reticulum. The protein localises to the membrane. This is an uncharacterized protein from Schizosaccharomyces pombe (strain 972 / ATCC 24843) (Fission yeast).